A 1309-amino-acid polypeptide reads, in one-letter code: Clustered mitochondria protein homolog (1309 aa).

The disordered stretch occupies residues 1–34; the sequence is MLLNGDCPESLKKEAAAAEPPRENGLDEAGPGDE. Over residues 9–25 the composition is skewed to basic and acidic residues; sequence ESLKKEAAAAEPPRENG. Phosphoserine is present on residues Ser279 and Ser281. Residues 335–577 form the Clu domain; it reads RAEDAYTSRL…RTFPPDLNFL (243 aa). The span at 636-651 shows a compositional bias: polar residues; it reads LETPSSLENGGPSSLE. Positions 636-674 are disordered; that stretch reads LETPSSLENGGPSSLESKSEDPPGQEAGSEEEGSSASGL. 3 positions are modified to phosphoserine: Ser654, Ser664, and Ser723. 4 TPR repeats span residues 978 to 1011, 1020 to 1053, 1104 to 1137, and 1146 to 1179; these read AFHF…FNNV, CACL…SERV, ALLD…STKY, and ALSH…YKTQ. The segment covering 1264 to 1278 has biased composition (basic and acidic residues); that stretch reads HQLQEASRNRDRAEE. Residues 1264 to 1309 form a disordered region; the sequence is HQLQEASRNRDRAEEPMATEPAPAGAPGDLGSQPPAAKDPSPSVQG. Residues 1279-1290 show a composition bias toward low complexity; the sequence is PMATEPAPAGAP.

It belongs to the CLU family.

It is found in the cytoplasm. It localises to the cytoplasmic granule. Functionally, mRNA-binding protein involved in proper cytoplasmic distribution of mitochondria. Specifically binds mRNAs of nuclear-encoded mitochondrial proteins in the cytoplasm and regulates transport or translation of these transcripts close to mitochondria, playing a role in mitochondrial biogenesis. In Homo sapiens (Human), this protein is Clustered mitochondria protein homolog (CLUH).